Reading from the N-terminus, the 82-residue chain is Short neurotoxin OKI-10 (82 aa).

Positions Lys-1–Thr-20 are cleaved as a signal peptide. 4 disulfide bridges follow: Cys-23–Cys-44, Cys-37–Cys-61, Cys-63–Cys-74, and Cys-75–Cys-80.

Belongs to the three-finger toxin family. Short-chain subfamily. Type I alpha-neurotoxin sub-subfamily. In terms of tissue distribution, expressed by the venom gland.

The protein resides in the secreted. Binds to muscle nicotinic acetylcholine receptor (nAChR) and inhibit acetylcholine from binding to the receptor, thereby impairing neuromuscular transmission. This is Short neurotoxin OKI-10 from Laticauda laticaudata (Blue-ringed sea krait).